Here is a 116-residue protein sequence, read N- to C-terminus: Large ribosomal subunit protein bL20 (116 aa).

This sequence belongs to the bacterial ribosomal protein bL20 family.

Functionally, binds directly to 23S ribosomal RNA and is necessary for the in vitro assembly process of the 50S ribosomal subunit. It is not involved in the protein synthesizing functions of that subunit. This Helicobacter pylori (strain Shi470) protein is Large ribosomal subunit protein bL20.